The primary structure comprises 131 residues: Profilin-4 (131 aa).

A disulfide bridge connects residues C13 and C115. An Involved in PIP2 interaction motif is present at residues 81–97; it reads AVIRGKKGAGGITVKKT. T111 carries the phosphothreonine modification.

This sequence belongs to the profilin family. Occurs in many kinds of cells as a complex with monomeric actin in a 1:1 ratio. Phosphorylated by MAP kinases.

Its subcellular location is the cytoplasm. The protein localises to the cytoskeleton. Binds to actin and affects the structure of the cytoskeleton. At high concentrations, profilin prevents the polymerization of actin, whereas it enhances it at low concentrations. This is Profilin-4 from Olea europaea (Common olive).